Reading from the N-terminus, the 355-residue chain is Guanine nucleotide-binding protein G(z) subunit alpha (355 aa).

Positions 1-14 are enriched in basic and acidic residues; sequence MGCRQSSEEKEAAR. Residues 1 to 26 are disordered; it reads MGCRQSSEEKEAARRSRRIDRHLRSE. Gly-2 carries N-myristoyl glycine lipidation. The S-palmitoyl cysteine moiety is linked to residue Cys-3. Residues 32-355 form the G-alpha domain; the sequence is REIKLLLLGT…QNNLKYIGLC (324 aa). The interval 35-48 is G1 motif; the sequence is KLLLLGTSNSGKST. GTP-binding positions include 40-47, 176-182, 201-205, 270-273, and Ala-327; these read GTSNSGKS, LRSRDMT, DVGGQ, and NKKD. Positions 47 and 182 each coordinate Mg(2+). The G2 motif stretch occupies residues 174–182; sequence DILRSRDMT. The tract at residues 197–206 is G3 motif; sequence FKMVDVGGQR. The tract at residues 266-273 is G4 motif; that stretch reads ILFLNKKD. Residues 325-330 form a G5 motif region; sequence TCATDT.

It belongs to the G-alpha family. G(i/o/t/z) subfamily. As to quaternary structure, G-proteins are composed of 3 units; alpha, beta and gamma. The alpha chain contains the guanine nucleotide binding site. Interacts with ADGRB2.

The protein localises to the membrane. Functionally, guanine nucleotide-binding proteins (G proteins) are involved as modulators or transducers in various transmembrane signaling systems. The protein is Guanine nucleotide-binding protein G(z) subunit alpha (Gnaz) of Rattus norvegicus (Rat).